A 154-amino-acid polypeptide reads, in one-letter code: Oleosin 16.4 kDa (154 aa).

A2 is subject to N-acetylalanine. The tract at residues 2 to 33 (ADRDRSYRTFDQVVRGDRTNYQSGPSTTQVLT) is polar. 3 helical membrane passes run 31-51 (VLTVLTLLPIGGTLLALAGLT), 65-85 (LFVIFSPVLVPAAIAVFMAVA), and 86-106 (GFLSSGAFGLTGLSSLSYVFN). Positions 34–105 (VLTLLPIGGT…TGLSSLSYVF (72 aa)) are hydrophobic.

It belongs to the oleosin family.

The protein localises to the lipid droplet. The protein resides in the membrane. Its function is as follows. May have a structural role to stabilize the lipid body during desiccation of the seed by preventing coalescence of the oil. Probably interacts with both lipid and phospholipid moieties of lipid bodies. May also provide recognition signals for specific lipase anchorage in lipolysis during seedling growth. The protein is Oleosin 16.4 kDa (MATP7) of Gossypium hirsutum (Upland cotton).